The chain runs to 280 residues: Large ribosomal subunit protein uL2cz/uL2cy (280 aa).

Disordered stretches follow at residues 1 to 25 and 231 to 280; these read MAIHLYKTSTPSTRNGAVDSQVKSN and PVDH…RRTK.

The protein belongs to the universal ribosomal protein uL2 family. In terms of assembly, part of the 50S ribosomal subunit.

Its subcellular location is the plastid. The protein localises to the chloroplast. This Platanus occidentalis (Sycamore) protein is Large ribosomal subunit protein uL2cz/uL2cy (rpl2-A).